Here is a 217-residue protein sequence, read N- to C-terminus: LexA repressor (217 aa).

Positions 26-46 (FEEMKLALDLKSKSGIHRLIK) form a DNA-binding region, H-T-H motif. Active-site for autocatalytic cleavage activity residues include serine 138 and lysine 176.

This sequence belongs to the peptidase S24 family. In terms of assembly, homodimer.

It carries out the reaction Hydrolysis of Ala-|-Gly bond in repressor LexA.. Represses a number of genes involved in the response to DNA damage (SOS response), including recA and lexA. In the presence of single-stranded DNA, RecA interacts with LexA causing an autocatalytic cleavage which disrupts the DNA-binding part of LexA, leading to derepression of the SOS regulon and eventually DNA repair. The chain is LexA repressor from Zymomonas mobilis subsp. mobilis (strain ATCC 31821 / ZM4 / CP4).